The chain runs to 626 residues: Chaperone protein HtpG (626 aa).

Residues 1 to 341 (METKQFKAES…SEDLSLNISR (341 aa)) are a; substrate-binding. The tract at residues 342–552 (EMLQHDRQLK…EGEISIEMEK (211 aa)) is b. Residues 553-626 (ILSAMPNNEN…FSNSICKLMI (74 aa)) form a c region.

The protein belongs to the heat shock protein 90 family. Homodimer.

It localises to the cytoplasm. In terms of biological role, molecular chaperone. Has ATPase activity. The sequence is that of Chaperone protein HtpG from Alkaliphilus oremlandii (strain OhILAs) (Clostridium oremlandii (strain OhILAs)).